A 177-amino-acid polypeptide reads, in one-letter code: Parathyroid hormone-related protein (177 aa).

A signal peptide spans M1–G24. A propeptide spanning residues R25–L34 is cleaved from the precursor. Positions R57–H68 are important for receptor binding. The segment at A74–H177 is disordered. Polar residues predominate over residues S76–N90. Positions T108–K129 match the Nuclear localization signal motif. Over residues N109–P118 the composition is skewed to basic and acidic residues. Residues P122 to K132 are compositionally biased toward basic residues.

This sequence belongs to the parathyroid hormone family. Interacts with PTH1R (via N-terminal extracellular domain). There are 3 principal secretory forms, called PTHrP[1-36], PTHrP[38-94], and osteostatin (PTHrP[107-139]) arising from endoproteolytic cleavage of the initial translation product. Each of these secretory forms is believed to have one or more of its own receptors that mediates the normal paracrine, autocrine and endocrine actions. Ubiquitous. Also expressed in the mammary gland.

It is found in the secreted. It localises to the cytoplasm. Its subcellular location is the nucleus. Functionally, neuroendocrine peptide which is a critical regulator of cellular and organ growth, development, migration, differentiation and survival and of epithelial calcium ion transport. Acts by binding to its receptor, PTH1R, activating G protein-coupled receptor signaling. Regulates endochondral bone development and epithelial-mesenchymal interactions during the formation of the mammary glands and teeth. Required for skeletal homeostasis. Promotes mammary mesenchyme differentiation and bud outgrowth by modulating mesenchymal cell responsiveness to BMPs. Up-regulates BMPR1A expression in the mammary mesenchyme and this increases the sensitivity of these cells to BMPs and allows them to respond to BMP4 in a paracrine and/or autocrine fashion. BMP4 signaling in the mesenchyme, in turn, triggers epithelial outgrowth and augments MSX2 expression, which causes the mammary mesenchyme to inhibit hair follicle formation within the nipple sheath. Promotes colon cancer cell migration and invasion in an integrin alpha-6/beta-1-dependent manner through activation of Rac1. In terms of biological role, potent inhibitor of osteoclastic bone resorption. The sequence is that of Parathyroid hormone-related protein from Homo sapiens (Human).